The chain runs to 134 residues: Histone H2A (134 aa).

The segment covering 1 to 10 (MTGGKSGGKA) has biased composition (gly residues). Positions 1 to 24 (MTGGKSGGKASGSKNAQSRSSKAG) are disordered. Lys-5 and Lys-9 each carry N6-acetyllysine. N5-methylglutamine is present on Gln-106. Residues 115 to 134 (QNLLPKKTPKSGKGPGSQEL) form a disordered region. At Ser-131 the chain carries Phosphoserine. The [ST]-Q motif motif lies at 131–132 (SQ).

This sequence belongs to the histone H2A family. As to quaternary structure, the nucleosome is a histone octamer containing two molecules each of H2A, H2B, H3 and H4 assembled in one H3-H4 heterotetramer and two H2A-H2B heterodimers. The octamer wraps approximately 147 bp of DNA. Phosphorylated to form H2AS128ph (gamma-H2A) in response to DNA double-strand breaks (DSBs) generated by exogenous genotoxic agents and by stalled replication forks. Phosphorylation is dependent on the DNA damage checkpoint kinases mec1/ATR and tel1/ATM, spreads on either side of a detected DSB site and may mark the surrounding chromatin for recruitment of proteins required for DNA damage signaling and repair. Gamma-H2A is removed from the DNA prior to the strand invasion-primer extension step of the repair process and subsequently dephosphorylated. Dephosphorylation is necessary for efficient recovery from the DNA damage checkpoint. Post-translationally, acetylated by esa1 to form H2AK4ac and H2AK7ac.

It localises to the nucleus. Its subcellular location is the chromosome. Core component of nucleosome which plays a central role in DNA double strand break (DSB) repair. Nucleosomes wrap and compact DNA into chromatin, limiting DNA accessibility to the cellular machineries which require DNA as a template. Histones thereby play a central role in transcription regulation, DNA repair, DNA replication and chromosomal stability. DNA accessibility is regulated via a complex set of post-translational modifications of histones, also called histone code, and nucleosome remodeling. The protein is Histone H2A (httA) of Aspergillus niger (strain ATCC MYA-4892 / CBS 513.88 / FGSC A1513).